A 143-amino-acid chain; its full sequence is Large ribosomal subunit protein uL11 (143 aa).

This sequence belongs to the universal ribosomal protein uL11 family. As to quaternary structure, part of the ribosomal stalk of the 50S ribosomal subunit. Interacts with L10 and the large rRNA to form the base of the stalk. L10 forms an elongated spine to which L12 dimers bind in a sequential fashion forming a multimeric L10(L12)X complex. In terms of processing, one or more lysine residues are methylated.

Functionally, forms part of the ribosomal stalk which helps the ribosome interact with GTP-bound translation factors. In Nitrosospira multiformis (strain ATCC 25196 / NCIMB 11849 / C 71), this protein is Large ribosomal subunit protein uL11.